The primary structure comprises 35 residues: MEALVYTFLLVSTLGIIFFAIFFREPPKVPDRGGK.

A helical transmembrane segment spans residues Ala3 to Phe23.

The protein belongs to the PsbT family. PSII is composed of 1 copy each of membrane proteins PsbA, PsbB, PsbC, PsbD, PsbE, PsbF, PsbH, PsbI, PsbJ, PsbK, PsbL, PsbM, PsbT, PsbY, PsbZ, Psb30/Ycf12, at least 3 peripheral proteins of the oxygen-evolving complex and a large number of cofactors. It forms dimeric complexes.

It localises to the plastid. The protein localises to the chloroplast thylakoid membrane. Functionally, found at the monomer-monomer interface of the photosystem II (PS II) dimer, plays a role in assembly and dimerization of PSII. PSII is a light-driven water plastoquinone oxidoreductase, using light energy to abstract electrons from H(2)O, generating a proton gradient subsequently used for ATP formation. This Taxus brevifolia (Pacific yew) protein is Photosystem II reaction center protein T.